The primary structure comprises 313 residues: Ribosomal RNA small subunit methyltransferase H (313 aa).

S-adenosyl-L-methionine-binding positions include 33–35 (AGH), E52, F80, D101, and Q108.

It belongs to the methyltransferase superfamily. RsmH family.

The protein localises to the cytoplasm. The catalysed reaction is cytidine(1402) in 16S rRNA + S-adenosyl-L-methionine = N(4)-methylcytidine(1402) in 16S rRNA + S-adenosyl-L-homocysteine + H(+). Its function is as follows. Specifically methylates the N4 position of cytidine in position 1402 (C1402) of 16S rRNA. The sequence is that of Ribosomal RNA small subunit methyltransferase H from Spiroplasma kunkelii.